A 259-amino-acid polypeptide reads, in one-letter code: UPF0246 protein PSPTO_1244 (259 aa).

It belongs to the UPF0246 family.

The chain is UPF0246 protein PSPTO_1244 from Pseudomonas syringae pv. tomato (strain ATCC BAA-871 / DC3000).